A 375-amino-acid chain; its full sequence is AA9 family lytic polysaccharide monooxygenase CEL1 (375 aa).

Positions 1-16 (MLFPALALLCPVLVAA) are cleaved as a signal peptide. H119 provides a ligand contact to Cu(2+). Residues C130 and C135 are joined by a disulfide bond. N-linked (GlcNAc...) asparagine glycosylation is present at N132. H196 lines the O2 pocket. N197 is a glycosylation site (N-linked (GlcNAc...) asparagine). Residue Y212 participates in Cu(2+) binding. C232 and C237 form a disulfide bridge. The segment at 287–375 (NGMSSSPSSS…RSRVAHLDRH (89 aa)) is disordered. A compositionally biased stretch (low complexity) spans 290–341 (SSSPSSSSGVSSSSSSSVASSDTSDSTTSSGVVAVNVSAASSPSSSISANSA). N325 is a glycosylation site (N-linked (GlcNAc...) asparagine). Residues 347–369 (KTCKRKKRSKIAGQKRHIHRSRV) are compositionally biased toward basic residues.

This sequence belongs to the polysaccharide monooxygenase AA9 family. The cofactor is Cu(2+).

It localises to the secreted. The protein localises to the cell wall. The catalysed reaction is [(1-&gt;4)-beta-D-glucosyl]n+m + reduced acceptor + O2 = 4-dehydro-beta-D-glucosyl-[(1-&gt;4)-beta-D-glucosyl]n-1 + [(1-&gt;4)-beta-D-glucosyl]m + acceptor + H2O.. Its function is as follows. Lytic polysaccharide monooxygenase (LPMO) that depolymerizes polysaccharides via the oxidation of scissile alpha- or beta-(1-4)-glycosidic bonds, yielding C4 oxidation products. Catalysis by LPMOs requires the reduction of the active-site copper from Cu(II) to Cu(I) by a reducing agent and H(2)O(2) or O(2) as a cosubstrate. Required for the expression of stress response phenotypes, including thermotolerance, cell wall integrity, and efficient cell cycle progression. Promotes intrinsic fungal cell wall remodeling events required for efficient adaptation to the host environment. Required for virulence in a murine inhalational model of cryptococcal infection as well as in Galleria mellonella larvae. The chain is AA9 family lytic polysaccharide monooxygenase CEL1 from Cryptococcus neoformans var. grubii serotype A (strain H99 / ATCC 208821 / CBS 10515 / FGSC 9487) (Filobasidiella neoformans var. grubii).